We begin with the raw amino-acid sequence, 148 residues long: Nucleoside diphosphate kinase (148 aa).

Residues Lys-9, Phe-57, Arg-85, Thr-91, Arg-102, and Asn-112 each coordinate ATP. His-115 acts as the Pros-phosphohistidine intermediate in catalysis.

It belongs to the NDK family. Mg(2+) is required as a cofactor.

The catalysed reaction is a 2'-deoxyribonucleoside 5'-diphosphate + ATP = a 2'-deoxyribonucleoside 5'-triphosphate + ADP. It carries out the reaction a ribonucleoside 5'-diphosphate + ATP = a ribonucleoside 5'-triphosphate + ADP. Major role in the synthesis of nucleoside triphosphates other than ATP. The ATP gamma phosphate is transferred to the NDP beta phosphate via a ping-pong mechanism, using a phosphorylated active-site intermediate. The chain is Nucleoside diphosphate kinase from Helianthus annuus (Common sunflower).